Consider the following 95-residue polypeptide: uncharacterized protein (95 aa).

A helical transmembrane segment spans residues 27-47; that stretch reads SFGLAIIGILLIACEIILFLT.

The protein resides in the membrane. This is an uncharacterized protein from Homo sapiens (Human).